The sequence spans 111 residues: Small ribosomal subunit protein uS17 (111 aa).

It belongs to the universal ribosomal protein uS17 family. Part of the 30S ribosomal subunit.

One of the primary rRNA binding proteins, it binds specifically to the 5'-end of 16S ribosomal RNA. The chain is Small ribosomal subunit protein uS17 from Methanocella arvoryzae (strain DSM 22066 / NBRC 105507 / MRE50).